We begin with the raw amino-acid sequence, 259 residues long: Probable transcriptional regulatory protein Noca_2383 (259 aa).

The protein belongs to the TACO1 family.

It localises to the cytoplasm. The sequence is that of Probable transcriptional regulatory protein Noca_2383 from Nocardioides sp. (strain ATCC BAA-499 / JS614).